The chain runs to 679 residues: Kelch-like protein diablo (679 aa).

Residues 1-48 (MGDLPGGGGGAAGGAGAAGGGGGGGNGAAGSSSSGGGASGSGGGGPGS) are compositionally biased toward gly residues. The tract at residues 1–84 (MGDLPGGGGG…RLSHTSEKHP (84 aa)) is disordered. The region spanning 101–168 (CDVVLNVGGR…CYTAHIIVEE (68 aa)) is the BTB domain. A BACK domain is found at 203–305 (CLGIRAFADT…SPKFLVGTVG (103 aa)). 6 Kelch repeats span residues 352-398 (VLFA…VLND), 400-446 (LYAV…VLDG), 447-493 (FLYA…VLGG), 495-540 (LYAI…VFNN), 542-587 (IYAV…VVNG), and 588-634 (QLYA…VMRA). Residues 643–679 (CDNNSSNNNNNNYNLKHQQQQPQQQQQQQQQQTQQQL) form a disordered region. Positions 645 to 679 (NNSSNNNNNNYNLKHQQQQPQQQQQQQQQQTQQQL) are enriched in low complexity.

Its pathway is protein modification; protein ubiquitination. Functionally, probable substrate-specific adapter of an E3 ubiquitin-protein ligase complex which mediates the ubiquitination and subsequent proteasomal degradation of target proteins. May have a role in synapse differentiation and growth. This is Kelch-like protein diablo from Drosophila willistoni (Fruit fly).